The sequence spans 189 residues: Gluconokinase (189 aa).

16-23 (GVSGAGKS) contributes to the ATP binding site.

This sequence belongs to the gluconokinase GntK/GntV family. Monomer.

The catalysed reaction is D-gluconate + ATP = 6-phospho-D-gluconate + ADP + H(+). The protein operates within carbohydrate acid metabolism; D-gluconate degradation. Its function is as follows. Phosphorylates gluconate to 6-phosphogluconate. The sequence is that of Gluconokinase from Arabidopsis thaliana (Mouse-ear cress).